We begin with the raw amino-acid sequence, 111 residues long: BET1-like protein (111 aa).

Residues 1–86 (MADWTRAQSS…VARSGRDTRK (86 aa)) lie on the Cytoplasmic side of the membrane. Phosphoserine occurs at positions 9 and 37. One can recognise a t-SNARE coiled-coil homology domain in the interval 15–77 (EIVDRENKRM…TGSVKRFSTV (63 aa)). A helical; Anchor for type IV membrane protein transmembrane segment spans residues 87–107 (LLCGMAVVLIVAFFILSYLFS). The Vesicular portion of the chain corresponds to 108–111 (RTRT).

As to quaternary structure, component of a SNARE complex consisting of STX5, YKT6, GOSR1 and BET1L. Interacts with STX5. Widely expressed. Highest levels in heart, liver, skeletal muscle and kidney.

It is found in the golgi apparatus membrane. It localises to the golgi apparatus. Its subcellular location is the trans-Golgi network membrane. Its function is as follows. Vesicle SNARE required for targeting and fusion of retrograde transport vesicles with the Golgi complex. Required for the integrity of the Golgi complex. The protein is BET1-like protein of Rattus norvegicus (Rat).